Here is a 272-residue protein sequence, read N- to C-terminus: Type III pantothenate kinase (272 aa).

Position 6–13 (6–13) interacts with ATP; the sequence is DVRNTHTV. Residue 109-112 coordinates substrate; that stretch reads GADR. Residue aspartate 111 is the Proton acceptor of the active site. Residue aspartate 131 participates in K(+) binding. Serine 134 is an ATP binding site. A substrate-binding site is contributed by threonine 186.

This sequence belongs to the type III pantothenate kinase family. As to quaternary structure, homodimer. NH4(+) is required as a cofactor. The cofactor is K(+).

The protein localises to the cytoplasm. The enzyme catalyses (R)-pantothenate + ATP = (R)-4'-phosphopantothenate + ADP + H(+). It functions in the pathway cofactor biosynthesis; coenzyme A biosynthesis; CoA from (R)-pantothenate: step 1/5. Its function is as follows. Catalyzes the phosphorylation of pantothenate (Pan), the first step in CoA biosynthesis. The polypeptide is Type III pantothenate kinase (Mycobacterium bovis (strain BCG / Pasteur 1173P2)).